Consider the following 1187-residue polypeptide: MPLRHWGMARGSKPVGDGAQPMAAMGGLKVLLHWAGPGGGEPWVTFSESSLTAEEVCIHIAHKVGITPPCFNLFALFDAQAQVWLPPNHILEIPRDASLMLYFRIRFYFRNWHGMNPREPAVYRCGPPGTEASSDQTAQGMQLLDPASFEYLFEQGKHEFVNDVASLWELSTEEEIHHFKNESLGMAFLHLCHLALRHGIPLEEVAKKTSFKDCIPRSFRRHIRQHSALTRLRLRNVFRRFLRDFQPGRLSQQMVMVKYLATLERLAPRFGTERVPVCHLRLLAQAEGEPCYIRDSGVAPTDPGPESAAGPPTHEVLVTGTGGIQWWPVEEEVNKEEGSSGSSGRNPQASLFGKKAKAHKAVGQPADRPREPLWAYFCDFRDITHVVLKEHCVSIHRQDNKCLELSLPSRAAALSFVSLVDGYFRLTADSSHYLCHEVAPPRLVMSIRDGIHGPLLEPFVQAKLRPEDGLYLIHWSTSHPYRLILTVAQRSQAPDGMQSLRLRKFPIEQQDGAFVLEGWGRSFPSVRELGAALQGCLLRAGDDCFSLRRCCLPQPGETSNLIIMRGARASPRTLNLSQLSFHRVDQKEITQLSHLGQGTRTNVYEGRLRVEGSGDPEEGKMDDEDPLVPGRDRGQELRVVLKVLDPSHHDIALAFYETASLMSQVSHTHLAFVHGVCVRGPENIMVTEYVEHGPLDVWLRRERGHVPMAWKMVVAQQLASALSYLENKNLVHGNVCGRNILLARLGLAEGTSPFIKLSDPGVGLGALSREERVERIPWLAPECLPGGANSLSTAMDKWGFGATLLEICFDGEAPLQSRSPSEKEHFYQRQHRLPEPSCPQLATLTSQCLTYEPTQRPSFRTILRDLTRLQPHNLADVLTVNPDSPASDPTVFHKRYLKKIRDLGEGHFGKVSLYCYDPTNDGTGEMVAVKALKADCGPQHRSGWKQEIDILRTLYHEHIIKYKGCCEDQGEKSLQLVMEYVPLGSLRDYLPRHSIGLAQLLLFAQQICEGMAYLHAQHYIHRDLAARNVLLDNDRLVKIGDFGLAKAVPEGHEYYRVREDGDSPVFWYAPECLKEYKFYYASDVWSFGVTLYELLTHCDSSQSPPTKFLELIGIAQGQMTVLRLTELLERGERLPRPDKCPCEVYHLMKNCWETEASFRPTFENLIPILKTVHEKYQGQAPSVFSVC.

The FERM domain maps to 26–431; it reads GGLKVLLHWA…GYFRLTADSS (406 aa). The residue at position 292 (Y292) is a Phosphotyrosine. Residues 335 to 366 are disordered; that stretch reads KEEGSSGSSGRNPQASLFGKKAKAHKAVGQPA. The span at 339-349 shows a compositional bias: polar residues; the sequence is SSGSSGRNPQA. Residues 450–529 form the SH2; atypical domain; the sequence is GIHGPLLEPF…GRSFPSVREL (80 aa). Phosphoserine occurs at positions 499 and 525. One can recognise a Protein kinase 1 domain in the interval 589-875; the sequence is ITQLSHLGQG…LTRLQPHNLA (287 aa). Y604 carries the phosphotyrosine modification. The disordered stretch occupies residues 610–629; it reads VEGSGDPEEGKMDDEDPLVP. Over residues 614 to 626 the composition is skewed to acidic residues; that stretch reads GDPEEGKMDDEDP. S884 carries the post-translational modification Phosphoserine. The Protein kinase 2 domain maps to 897–1176; it reads LKKIRDLGEG…PILKTVHEKY (280 aa). Residues 903–911 and K930 contribute to the ATP site; that span reads LGEGHFGKV. D1023 serves as the catalytic Proton acceptor. Y1054 bears the Phosphotyrosine; by autocatalysis mark. Y1055 carries the post-translational modification Phosphotyrosine.

This sequence belongs to the protein kinase superfamily. Tyr protein kinase family. JAK subfamily. As to quaternary structure, interacts (via FERM domain) with JAKMIP1. Interacts with PIK3R1; this interaction is important for cell migration. Interacts with MPL/TPOR. In terms of assembly, (Microbial infection) Interacts with Epstein-Barr virus protein LMP1; this interaction inhibits TYK2-mediated interferon signaling. (Microbial infection) Interacts with papillomavirus-18 protein E6; this interaction impairs JAK-STAT activation by interferon-alpha. As to quaternary structure, (Microbial infection) Interacts with Epstein-Barr virus (EBV) tegument protein BGLF2; this interaction participates in the inhibition of type I IFN signaling by the virus. In terms of processing, phosphorylated. Phosphorylation by JAK1 at Tyr-1054 and Tyr-1055 induces kinase activation. In terms of tissue distribution, observed in all cell lines analyzed. Expressed in a variety of lymphoid and non-lymphoid cell lines.

The enzyme catalyses L-tyrosyl-[protein] + ATP = O-phospho-L-tyrosyl-[protein] + ADP + H(+). Its activity is regulated as follows. The protein kinase 1 domain (also termed pseudokinase domain) mediates autoinhibition of the TYK2 kinase domain. Functionally, tyrosine kinase of the non-receptor type involved in numerous cytokines and interferons signaling, which regulates cell growth, development, cell migration, innate and adaptive immunity. Plays both structural and catalytic roles in numerous interleukins and interferons (IFN-alpha/beta) signaling. Associates with heterodimeric cytokine receptor complexes and activates STAT family members including STAT1, STAT3, STAT4 or STAT6. The heterodimeric cytokine receptor complexes are composed of (1) a TYK2-associated receptor chain (IFNAR1, IL12RB1, IL10RB or IL13RA1), and (2) a second receptor chain associated either with JAK1 or JAK2. In response to cytokine-binding to receptors, phosphorylates and activates receptors (IFNAR1, IL12RB1, IL10RB or IL13RA1), creating docking sites for STAT members. In turn, recruited STATs are phosphorylated by TYK2 (or JAK1/JAK2 on the second receptor chain), form homo- and heterodimers, translocate to the nucleus, and regulate cytokine/growth factor responsive genes. Negatively regulates STAT3 activity by promototing phosphorylation at a specific tyrosine that differs from the site used for signaling. The sequence is that of Non-receptor tyrosine-protein kinase TYK2 (TYK2) from Homo sapiens (Human).